The following is a 147-amino-acid chain: Hemoglobin subunit beta (147 aa).

Residue V2 is modified to N-acetylvaline. The 145-residue stretch at 3 to 147 (HLTGEEKAAV…VANALAHKYH (145 aa)) folds into the Globin domain. Position 13 is a phosphothreonine (T13). The residue at position 45 (S45) is a Phosphoserine. K60 is modified (N6-acetyllysine). H64 contributes to the heme b binding site. K83 is subject to N6-acetyllysine. H93 serves as a coordination point for heme b. At C94 the chain carries S-nitrosocysteine. Residue K145 is modified to N6-acetyllysine.

Belongs to the globin family. Heterotetramer of two alpha chains and two beta chains. In terms of tissue distribution, red blood cells.

Involved in oxygen transport from the lung to the various peripheral tissues. The chain is Hemoglobin subunit beta (HBB) from Ateles belzebuth (White-bellied spider monkey).